Reading from the N-terminus, the 100-residue chain is Large ribosomal subunit protein uL23 (100 aa).

The protein belongs to the universal ribosomal protein uL23 family. As to quaternary structure, part of the 50S ribosomal subunit. Contacts protein L29, and trigger factor when it is bound to the ribosome.

One of the early assembly proteins it binds 23S rRNA. One of the proteins that surrounds the polypeptide exit tunnel on the outside of the ribosome. Forms the main docking site for trigger factor binding to the ribosome. This is Large ribosomal subunit protein uL23 from Shewanella amazonensis (strain ATCC BAA-1098 / SB2B).